The chain runs to 698 residues: Protein let-99 (698 aa).

A DEP domain is found at 23 to 107 (FRSNLSLKTN…SESRIYLFMK (85 aa)). Disordered regions lie at residues 115 to 188 (PKPR…DDEI) and 653 to 672 (ITRS…QASP). The span at 146 to 157 (RPPKARLPRRLS) shows a compositional bias: basic residues. A compositionally biased stretch (basic and acidic residues) spans 178 to 188 (HGFDDHKDDEI).

Its subcellular location is the cytoplasm. The protein localises to the cell cortex. Functionally, required for the proper orientation of spindles after the establishment of polarity. May play a role in interactions between the astral microtubules and the cortical cytoskeleton. Required for asymmetric forces on nuclei and spindles. Acts downstream of the PAR signaling as an intermediate that transduces polarity information to the machinery that positions the mitotic spindle, possibly by regulating force generation. Regulates gpr-1/2 asymmetric cortical localization during the first embryonic cell divisions. Acts antagonistically to the gpr-1/2 signaling pathway. Regulates mes-1 expression and/or localization pattern during early embryogenesis. This chain is Protein let-99 (let-99), found in Caenorhabditis elegans.